Consider the following 354-residue polypeptide: Malate dehydrogenase 2, peroxisomal (354 aa).

Residues 10-18 form a peroxisomal targeting signal PTS2 region; it reads RIARISAHL. NAD(+)-binding positions include 49-55 and aspartate 75; that span reads GAAGGIG. The substrate site is built by arginine 122 and arginine 128. NAD(+) is bound by residues asparagine 135 and 158 to 160; that span reads ISN. Substrate-binding residues include asparagine 160 and arginine 194. The active-site Proton acceptor is histidine 218. Residue methionine 269 coordinates NAD(+).

Belongs to the LDH/MDH superfamily. MDH type 1 family. In terms of assembly, homodimer. In terms of tissue distribution, expressed in rosette leaves.

The protein localises to the peroxisome. It carries out the reaction (S)-malate + NAD(+) = oxaloacetate + NADH + H(+). In terms of biological role, catalyzes a reversible NAD-dependent dehydrogenase reaction involved in central metabolism and redox homeostasis between organelle compartments. Peroxisomal NAD-dependent malate dehydrogenase involved in fatty acid beta-oxidation. Reoxidizes NADH from the beta-oxidation and provides NAD for the conversion of fatty acyl-CoA to acetyl-CoA. Does not participate directly in the glyoxylate cycle. Required for maintenance of photosynthetic rates under photorespiratory conditions, and carbon flow during photorespiration. Supplies NADH reductant to the peroxisomal hydroxypyruvate reductase (HPR), which reduces hydroxypyruvate into glycerate in the photorespiratory cycle. The protein is Malate dehydrogenase 2, peroxisomal of Arabidopsis thaliana (Mouse-ear cress).